Reading from the N-terminus, the 868-residue chain is Leucine--tRNA ligase (868 aa).

The short motif at 42 to 52 is the 'HIGH' region element; it reads PYPSGKLHMGH. A 'KMSKS' region motif is present at residues 627-631; sequence KMSKS. K630 serves as a coordination point for ATP.

Belongs to the class-I aminoacyl-tRNA synthetase family.

It localises to the cytoplasm. The enzyme catalyses tRNA(Leu) + L-leucine + ATP = L-leucyl-tRNA(Leu) + AMP + diphosphate. The chain is Leucine--tRNA ligase from Pseudomonas putida (strain GB-1).